Reading from the N-terminus, the 165-residue chain is 3-hydroxyacyl-[acyl-carrier-protein] dehydratase FabZ (165 aa).

His-68 is a catalytic residue.

Belongs to the thioester dehydratase family. FabZ subfamily.

The protein localises to the cytoplasm. It catalyses the reaction a (3R)-hydroxyacyl-[ACP] = a (2E)-enoyl-[ACP] + H2O. In terms of biological role, involved in unsaturated fatty acids biosynthesis. Catalyzes the dehydration of short chain beta-hydroxyacyl-ACPs and long chain saturated and unsaturated beta-hydroxyacyl-ACPs. This is 3-hydroxyacyl-[acyl-carrier-protein] dehydratase FabZ from Methylobacterium sp. (strain 4-46).